Reading from the N-terminus, the 472-residue chain is Nucleoporin NUP49/NSP49 (472 aa).

The FG 1 repeat unit spans residues 2 to 3 (FG). One copy of the GLFG 1 repeat lies at 14 to 17 (GLFG). Residues 28–104 (NTGFSFGGTQ…TANTGGGLFG (77 aa)) form a disordered region. One copy of the FG 2 repeat lies at 33 to 34 (FG). A GLFG 2 repeat occupies 48-51 (GLFG). The segment covering 64–80 (SFGQQQQQSQTNAFGGS) has biased composition (low complexity). FG repeat units lie at residues 65–66 (FG) and 77–78 (FG). GLFG repeat units lie at residues 86–89 (GLFG) and 101–104 (GLFG). An SLFG 1 repeat occupies 113–116 (SLFG). GLFG repeat units follow at residues 125–128 (GLFG) and 148–151 (GLFG). An SLFG 2 repeat occupies 159-162 (SLFG). One copy of the GLFG 7; approximate repeat lies at 175-178 (GMFG). The SLFG 3 repeat unit spans residues 185 to 188 (SLFG). The GLFG 8 repeat unit spans residues 199–202 (GLFG). Residues 210–213 (SLFG) form an SLFG 4 repeat. Positions 211–242 (LFGSSNNNNNNNNSNNIMSASGGLFGNQQQQL) are disordered. The segment covering 214–226 (SSNNNNNNNNSNN) has biased composition (low complexity). A GLFG 9 repeat occupies 233 to 236 (GLFG).

It belongs to the nucleoporin GLFG family. Component of the nuclear pore complex (NPC). NPC constitutes the exclusive means of nucleocytoplasmic transport. NPCs allow the passive diffusion of ions and small molecules and the active, nuclear transport receptor-mediated bidirectional transport of macromolecules such as proteins, RNAs, ribonucleoparticles (RNPs), and ribosomal subunits across the nuclear envelope. Due to its 8-fold rotational symmetry, all subunits are present with 8 copies or multiples thereof. NUP49 is part of the NUP57 subcomplex (NIC96, NSP1, NUP49, NUP57) interacting with NUP57. Interacts through its FG repeats with karyopherins.

The protein localises to the nucleus. It is found in the nuclear pore complex. The protein resides in the nucleus membrane. Its function is as follows. Functions as a component of the nuclear pore complex (NPC). NPC components, collectively referred to as nucleoporins (NUPs), can play the role of both NPC structural components and of docking or interaction partners for transiently associated nuclear transport factors. Active directional transport is assured by both, a Phe-Gly (FG) repeat affinity gradient for these transport factors across the NPC and a transport cofactor concentration gradient across the nuclear envelope (GSP1 and GSP2 GTPases associated predominantly with GTP in the nucleus, with GDP in the cytoplasm). NUP49 plays an important role in several nuclear transport pathways including poly(A)+ RNA, tRNA, and pre-ribosome transport. The protein is Nucleoporin NUP49/NSP49 (NUP49) of Saccharomyces cerevisiae (strain ATCC 204508 / S288c) (Baker's yeast).